The chain runs to 735 residues: Muskelin (735 aa).

N-acetylalanine is present on Ala2. Residues 172-204 (REQEAIRLCLKHFRQHNYTEAFESLQKKTKIAL) form the LisH domain. The 53-residue stretch at 206 to 258 (HPMLTDMHDKLVLKGDFDACEELIEKAVNDGLFNQYISQQEYKPRWSQIIPKS) folds into the CTLH domain. 6 Kelch repeats span residues 284–330 (TVYL…SCHK), 339–391 (QIYT…FDHQ), 400–458 (MIYT…SRIG), 469–515 (CLYV…TGFT), 526–578 (EIHV…SLQE), and 597–651 (VHYL…AQMD).

In terms of assembly, homodimer; may form higher oligomers. Identified in the CTLH complex that contains GID4, RANBP9 and/or RANBP10, MKLN1, MAEA, RMND5A (or alternatively its paralog RMND5B), GID8, ARMC8, WDR26 and YPEL5. Within this complex, MAEA, RMND5A (or alternatively its paralog RMND5B), GID8, WDR26, and RANBP9 and/or RANBP10 form the catalytic core, while GID4, MKLN1, ARMC8 and YPEL5 have ancillary roles. Interacts with RANBP9. Part of a complex consisting of RANBP9, MKLN1 and GID8. Interacts with GABRA1. Interacts with the C-terminal tail of PTGER3.

The protein localises to the cytoplasm. It localises to the cell projection. It is found in the ruffle. The protein resides in the cell cortex. Its subcellular location is the synapse. The protein localises to the postsynapse. Its function is as follows. Component of the CTLH E3 ubiquitin-protein ligase complex that selectively accepts ubiquitin from UBE2H and mediates ubiquitination and subsequent proteasomal degradation of the transcription factor HBP1. Required for internalization of the GABA receptor GABRA1 from the cell membrane via endosomes and subsequent GABRA1 degradation. Acts as a mediator of cell spreading and cytoskeletal responses to the extracellular matrix component THBS1. The chain is Muskelin (Mkln1) from Rattus norvegicus (Rat).